The sequence spans 287 residues: Protease HtpX (287 aa).

2 helical membrane-spanning segments follow: residues 4–24 (IMLF…VLNI) and 36–56 (LSGL…ISLM). Residue His-143 coordinates Zn(2+). The active site involves Glu-144. His-147 contributes to the Zn(2+) binding site. Helical transmembrane passes span 158–178 (LMQG…ANIV) and 192–212 (MVYF…ASFI). Glu-221 provides a ligand contact to Zn(2+).

This sequence belongs to the peptidase M48B family. It depends on Zn(2+) as a cofactor.

Its subcellular location is the cell inner membrane. The protein is Protease HtpX of Vibrio parahaemolyticus serotype O3:K6 (strain RIMD 2210633).